The primary structure comprises 474 residues: 4-aminobutyrate aminotransferase (474 aa).

The segment covering 1–13 (MSSTATVTESTHF) has biased composition (polar residues). Residues 1 to 31 (MSSTATVTESTHFFPNEPQGPSIKTETIPGP) form a disordered region. 142–143 (GS) is a binding site for pyridoxal 5'-phosphate. Arginine 199 lines the substrate pocket. The residue at position 333 (lysine 333) is an N6-(pyridoxal phosphate)lysine. Position 357 (threonine 357) interacts with pyridoxal 5'-phosphate.

The protein belongs to the class-III pyridoxal-phosphate-dependent aminotransferase family. Homodimer. Requires pyridoxal 5'-phosphate as cofactor.

The protein localises to the cytoplasm. The catalysed reaction is 4-aminobutanoate + 2-oxoglutarate = succinate semialdehyde + L-glutamate. Its function is as follows. Required for the degradation of gamma-aminobutyric acid (GABA), which is important for utilization of GABA as nitrogen source. Deaminates GABA to succinate-semialdehyde, which in turn is converted to succinate by the succinate semialdehyde dehydrogenase. Cannot transaminate beta-alanine (BAL). In Schizosaccharomyces pombe (strain 972 / ATCC 24843) (Fission yeast), this protein is 4-aminobutyrate aminotransferase (uga1).